A 294-amino-acid chain; its full sequence is Flavin-dependent thymidylate synthase (294 aa).

Residues 27–250 (GFIRVIDYMG…PFTYEAFEEY (224 aa)) enclose the ThyX domain. Residues threonine 73, 96–98 (RHR), and glutamate 104 contribute to the FAD site. DUMP contacts are provided by residues 93-96 (QWIR), 104-108 (EYSAR), and arginine 189. The ThyX motif signature appears at 96 to 106 (RHRTASVNEYS). FAD contacts are provided by residues 205 to 207 (NLH) and histidine 211. Position 216 (arginine 216) interacts with dUMP. The active-site Involved in ionization of N3 of dUMP, leading to its activation is the arginine 216.

Belongs to the thymidylate synthase ThyX family. In terms of assembly, homotetramer. It depends on FAD as a cofactor.

The enzyme catalyses dUMP + (6R)-5,10-methylene-5,6,7,8-tetrahydrofolate + NADPH + H(+) = dTMP + (6S)-5,6,7,8-tetrahydrofolate + NADP(+). The protein operates within pyrimidine metabolism; dTTP biosynthesis. In terms of biological role, catalyzes the reductive methylation of 2'-deoxyuridine-5'-monophosphate (dUMP) to 2'-deoxythymidine-5'-monophosphate (dTMP) while utilizing 5,10-methylenetetrahydrofolate (mTHF) as the methyl donor, and NADPH and FADH(2) as the reductant. The protein is Flavin-dependent thymidylate synthase of Rickettsia prowazekii (strain Madrid E).